Here is a 239-residue protein sequence, read N- to C-terminus: 4-hydroxy-tetrahydrodipicolinate reductase (239 aa).

NAD(+) contacts are provided by residues 8–13, 78–80, and 102–105; these read GSTGKM, GTT, and SANM. The active-site Proton donor/acceptor is His134. His135 contributes to the (S)-2,3,4,5-tetrahydrodipicolinate binding site. Lys138 acts as the Proton donor in catalysis. Residue 144 to 145 participates in (S)-2,3,4,5-tetrahydrodipicolinate binding; that stretch reads GT.

This sequence belongs to the DapB family.

It localises to the cytoplasm. The catalysed reaction is (S)-2,3,4,5-tetrahydrodipicolinate + NAD(+) + H2O = (2S,4S)-4-hydroxy-2,3,4,5-tetrahydrodipicolinate + NADH + H(+). It carries out the reaction (S)-2,3,4,5-tetrahydrodipicolinate + NADP(+) + H2O = (2S,4S)-4-hydroxy-2,3,4,5-tetrahydrodipicolinate + NADPH + H(+). It participates in amino-acid biosynthesis; L-lysine biosynthesis via DAP pathway; (S)-tetrahydrodipicolinate from L-aspartate: step 4/4. Catalyzes the conversion of 4-hydroxy-tetrahydrodipicolinate (HTPA) to tetrahydrodipicolinate. This chain is 4-hydroxy-tetrahydrodipicolinate reductase, found in Rickettsia conorii (strain ATCC VR-613 / Malish 7).